The sequence spans 138 residues: Ribosome-binding factor A (138 aa).

The segment at 119 to 138 is disordered; it reads RSPEVQRDLGPSNEKDDEQN.

It belongs to the RbfA family. As to quaternary structure, monomer. Binds 30S ribosomal subunits, but not 50S ribosomal subunits or 70S ribosomes.

The protein resides in the cytoplasm. One of several proteins that assist in the late maturation steps of the functional core of the 30S ribosomal subunit. Associates with free 30S ribosomal subunits (but not with 30S subunits that are part of 70S ribosomes or polysomes). Required for efficient processing of 16S rRNA. May interact with the 5'-terminal helix region of 16S rRNA. The chain is Ribosome-binding factor A from Agrobacterium fabrum (strain C58 / ATCC 33970) (Agrobacterium tumefaciens (strain C58)).